Here is a 316-residue protein sequence, read N- to C-terminus: MFNLVELAVKGNPELKKRYSQGLDLAIAMSENIPDQFKLIETPTNSFLLISNVMPEDSRPWHTQIQKCLDFSNLHLPKLNKLNKICTGYDHREDTVKKLEAVPPYLVYDSEEWKLALQINKDSLIYSAIEMLADPKNWQGLYPIDPLPYIWLLFYGKKSFCASSDCIYFKKYNVPGPMLLPPHMYRPDKNISSFISHVCQYVKNLYEEVSEPINLEIVPFDNCRIKEAVEELKQIDLPVAYLSNLCLLCTLHRQNMSASRGSGDMCGYIVLGGEGEKYITTNIISKRCTVSGDCLIVPSYNISLLMQNMEINYEQQ.

Belongs to the herpesviridae UL95 family.

The chain is Gene 34 protein (34) from Saimiriine herpesvirus 2 (strain 11) (SaHV-2).